A 177-amino-acid chain; its full sequence is Adenine phosphoribosyltransferase (177 aa).

It belongs to the purine/pyrimidine phosphoribosyltransferase family. In terms of assembly, homodimer.

It localises to the cytoplasm. It carries out the reaction AMP + diphosphate = 5-phospho-alpha-D-ribose 1-diphosphate + adenine. Its pathway is purine metabolism; AMP biosynthesis via salvage pathway; AMP from adenine: step 1/1. In terms of biological role, catalyzes a salvage reaction resulting in the formation of AMP, that is energically less costly than de novo synthesis. In Mycoplasma pneumoniae (strain ATCC 29342 / M129 / Subtype 1) (Mycoplasmoides pneumoniae), this protein is Adenine phosphoribosyltransferase.